A 640-amino-acid chain; its full sequence is 1-deoxy-D-xylulose-5-phosphate synthase (640 aa).

Residues His-75 and Gly-117–Ala-119 contribute to the thiamine diphosphate site. Asp-146 lines the Mg(2+) pocket. Residues Ala-147–Ala-148, Asn-175, and Glu-370 contribute to the thiamine diphosphate site. Asn-175 is a Mg(2+) binding site.

This sequence belongs to the transketolase family. DXPS subfamily. As to quaternary structure, homodimer. Mg(2+) is required as a cofactor. It depends on thiamine diphosphate as a cofactor.

The enzyme catalyses D-glyceraldehyde 3-phosphate + pyruvate + H(+) = 1-deoxy-D-xylulose 5-phosphate + CO2. It functions in the pathway metabolic intermediate biosynthesis; 1-deoxy-D-xylulose 5-phosphate biosynthesis; 1-deoxy-D-xylulose 5-phosphate from D-glyceraldehyde 3-phosphate and pyruvate: step 1/1. Catalyzes the acyloin condensation reaction between C atoms 2 and 3 of pyruvate and glyceraldehyde 3-phosphate to yield 1-deoxy-D-xylulose-5-phosphate (DXP). This is 1-deoxy-D-xylulose-5-phosphate synthase from Chlamydia trachomatis serovar L2 (strain ATCC VR-902B / DSM 19102 / 434/Bu).